The sequence spans 363 residues: MIIYTTEVEDINSFYTLESLKEVYGIIWMLVPILTLVLGITIGVLVIVWLEREISAGIQQRIGPEYAGPLGLLQALADGTKLLFKENILPSRGNTRLFSIGPAIAVISILLSFSVIPFSSRLILADLNIGIFLWIAISSIAPVGLLMSGYGSNNKYSFLGGLRAAAQSISYEIPLTLCVLSISLLSNSSSTIDIVEAQSKYGYWGWNLWRQPIGFIVFLISSLAECERLPFDLPEAEEELVAGYQTEYSGIKFGLFYVASYLNLLLSSLFVTVLYLGGWNISIPYVFAPELFEINKINGIIGTTIGIFITLAKTYLFLFISIATRWTLPRLRMDQLLNLGWKFLLPISLGNLLLTTSFQLLSL.

Transmembrane regions (helical) follow at residues 30 to 50 (LVPI…IVWL), 98 to 118 (FSIG…VIPF), 129 to 149 (IGIF…LMSG), 248 to 268 (YSGI…LLSS), 300 to 320 (IIGT…FLFI), and 343 to 363 (FLLP…LLSL).

This sequence belongs to the complex I subunit 1 family. NDH is composed of at least 16 different subunits, 5 of which are encoded in the nucleus.

The protein localises to the plastid. Its subcellular location is the chloroplast thylakoid membrane. The enzyme catalyses a plastoquinone + NADH + (n+1) H(+)(in) = a plastoquinol + NAD(+) + n H(+)(out). It carries out the reaction a plastoquinone + NADPH + (n+1) H(+)(in) = a plastoquinol + NADP(+) + n H(+)(out). Its function is as follows. NDH shuttles electrons from NAD(P)H:plastoquinone, via FMN and iron-sulfur (Fe-S) centers, to quinones in the photosynthetic chain and possibly in a chloroplast respiratory chain. The immediate electron acceptor for the enzyme in this species is believed to be plastoquinone. Couples the redox reaction to proton translocation, and thus conserves the redox energy in a proton gradient. This chain is NAD(P)H-quinone oxidoreductase subunit 1, chloroplastic, found in Gossypium barbadense (Sea Island cotton).